Here is a 375-residue protein sequence, read N- to C-terminus: Serpin B5 (375 aa).

Asn99, Asn133, Asn188, Asn298, and Asn361 each carry an N-linked (GlcNAc...) asparagine glycan.

It belongs to the serpin family. Ov-serpin subfamily. Interacts with IRF6.

The protein resides in the secreted. The protein localises to the extracellular space. In terms of biological role, tumor suppressor. It blocks the growth, invasion, and metastatic properties of mammary tumors. As it does not undergo the S (stressed) to R (relaxed) conformational transition characteristic of active serpins, it exhibits no serine protease inhibitory activity. This Rattus norvegicus (Rat) protein is Serpin B5 (Serpinb5).